Reading from the N-terminus, the 122-residue chain is Large ribosomal subunit protein uL14 (122 aa).

The protein belongs to the universal ribosomal protein uL14 family. Part of the 50S ribosomal subunit. Forms a cluster with proteins L3 and L19. In the 70S ribosome, L14 and L19 interact and together make contacts with the 16S rRNA in bridges B5 and B8.

In terms of biological role, binds to 23S rRNA. Forms part of two intersubunit bridges in the 70S ribosome. The chain is Large ribosomal subunit protein uL14 from Streptomyces avermitilis (strain ATCC 31267 / DSM 46492 / JCM 5070 / NBRC 14893 / NCIMB 12804 / NRRL 8165 / MA-4680).